The primary structure comprises 232 residues: Orotate phosphoribosyltransferase (232 aa).

A 5-phospho-alpha-D-ribose 1-diphosphate-binding site is contributed by Lys-28. 36-37 contacts orotate; the sequence is FF. 5-phospho-alpha-D-ribose 1-diphosphate contacts are provided by residues 78 to 79, Arg-108, Lys-109, Lys-112, His-114, and 134 to 142; these read YK and DDVITAGTA. Thr-138 and Arg-166 together coordinate orotate.

This sequence belongs to the purine/pyrimidine phosphoribosyltransferase family. PyrE subfamily. As to quaternary structure, homodimer.

It catalyses the reaction orotidine 5'-phosphate + diphosphate = orotate + 5-phospho-alpha-D-ribose 1-diphosphate. The protein operates within pyrimidine metabolism; UMP biosynthesis via de novo pathway; UMP from orotate: step 1/2. Its function is as follows. Catalyzes the transfer of a ribosyl phosphate group from 5-phosphoribose 1-diphosphate to orotate, leading to the formation of orotidine monophosphate (OMP). The polypeptide is Orotate phosphoribosyltransferase (URA5) (Sordaria macrospora).